The following is a 347-amino-acid chain: Phenylalanine--tRNA ligase alpha subunit (347 aa).

Residue E265 participates in Mg(2+) binding.

The protein belongs to the class-II aminoacyl-tRNA synthetase family. Phe-tRNA synthetase alpha subunit type 1 subfamily. As to quaternary structure, tetramer of two alpha and two beta subunits. It depends on Mg(2+) as a cofactor.

Its subcellular location is the cytoplasm. The enzyme catalyses tRNA(Phe) + L-phenylalanine + ATP = L-phenylalanyl-tRNA(Phe) + AMP + diphosphate + H(+). This Mycolicibacterium paratuberculosis (strain ATCC BAA-968 / K-10) (Mycobacterium paratuberculosis) protein is Phenylalanine--tRNA ligase alpha subunit.